The chain runs to 92 residues: Small ribosomal subunit protein bS21A (92 aa).

Basic and acidic residues predominate over residues 25–52; the sequence is GVFREMKQRRSYEKPSERKTREKSEAIR. The disordered stretch occupies residues 25-92; it reads GVFREMKQRR…LPQTAARPAG (68 aa).

The protein belongs to the bacterial ribosomal protein bS21 family.

The polypeptide is Small ribosomal subunit protein bS21A (Bradyrhizobium diazoefficiens (strain JCM 10833 / BCRC 13528 / IAM 13628 / NBRC 14792 / USDA 110)).